Reading from the N-terminus, the 799-residue chain is High affinity nerve growth factor receptor (799 aa).

An N-terminal signal peptide occupies residues methionine 1–cysteine 32. The Extracellular portion of the chain corresponds to alanine 33 to proline 418. 2 cysteine pairs are disulfide-bonded: cysteine 36-cysteine 41 and cysteine 40-cysteine 50. The N-linked (GlcNAc...) asparagine glycan is linked to asparagine 67. LRR repeat units lie at residues leucine 90–phenylalanine 113 and arginine 116–glycine 137. Asparagine 121, asparagine 190, asparagine 204, asparagine 255, asparagine 264, asparagine 320, asparagine 325, asparagine 341, asparagine 361, and asparagine 404 each carry an N-linked (GlcNAc...) asparagine glycan. One can recognise an LRRCT domain in the interval asparagine 148–valine 219. The cysteines at positions 154 and 193 are disulfide-linked. Ig-like C2-type domains are found at residues proline 196–serine 285 and alanine 295–asparagine 368. Intrachain disulfides connect cysteine 217–cysteine 267 and cysteine 302–cysteine 348. The helical transmembrane segment at phenylalanine 419 to leucine 442 threads the bilayer. Residues asparagine 443–glycine 799 are Cytoplasmic-facing. An interaction with SQSTM1 region spans residues methionine 472 to isoleucine 493. Tyrosine 499 bears the Phosphotyrosine; by autocatalysis mark. A Protein kinase domain is found at isoleucine 513–leucine 784. Residues leucine 519–valine 527 and lysine 547 contribute to the ATP site. The active-site Proton acceptor is the aspartate 653. Tyrosine 679, tyrosine 683, tyrosine 684, and tyrosine 794 each carry phosphotyrosine; by autocatalysis.

This sequence belongs to the protein kinase superfamily. Tyr protein kinase family. Insulin receptor subfamily. As to quaternary structure, exists in a dynamic equilibrium between monomeric (low affinity) and dimeric (high affinity) structures. Homodimerization is induced by binding of a NGF dimer. Found in a complex, at least composed of KIDINS220, MAGI2, NTRK1 and RAPGEF2; the complex is mainly formed at late endosomes in a nerve growth factor (NGF)-dependent manner. Interacts with RAPGEF2; the interaction is strengthened after NGF stimulation. Interacts with SQSTM1; bridges NTRK1 to NGFR. Forms a ternary complex with NGFR and KIDINS220; this complex is affected by the expression levels of KIDINS220 and an increase in KIDINS220 expression leads to a decreased association of NGFR and NTRK1. Interacts (phosphorylated upon activation by NGF) with SHC1; mediates SHC1 phosphorylation and activation. Interacts (phosphorylated upon activation by NGF) with PLCG1; mediates PLCG1 phosphorylation and activation. Interacts (phosphorylated) with SH2B1 and SH2B2. Interacts with GRB2. Interacts with PIK3R1. Interacts with FRS2. Interacts with SORT1; may regulate NTRK1 anterograde axonal transport. Interacts with SH2D1A; regulates NTRK1. Interacts with NRADD. Interacts with RAB7A. Interacts with PTPRS. Interacts with USP36; USP36 does not deubiquitinate NTRK1. Interacts with GGA3. Interacts with TSPAN1; this interaction promotes NTRK1 stability. In terms of processing, ligand-mediated autophosphorylation. Interaction with SQSTM1 is phosphotyrosine-dependent. Autophosphorylation at Tyr-499 mediates interaction and phosphorylation of SHC1. Post-translationally, N-glycosylated. Ubiquitinated. Undergoes polyubiquitination upon activation; regulated by NGFR. Ubiquitination by NEDD4L leads to degradation. Ubiquitination regulates the internalization of the receptor. Isoform Trka-II is primarily expressed in neuronal cells; isoform Trka-I is found in non-neuronal tissues.

The protein localises to the cell membrane. Its subcellular location is the early endosome membrane. The protein resides in the late endosome membrane. It localises to the recycling endosome membrane. The enzyme catalyses L-tyrosyl-[protein] + ATP = O-phospho-L-tyrosyl-[protein] + ADP + H(+). The pro-survival signaling effect of NTRK1 in neurons requires its endocytosis into signaling early endosomes and its retrograde axonal transport. This is regulated by different proteins including CFL1, RAC1 and SORT1. NTF3 is unable to induce this signaling probably due to the lability of the NTF3-NTRK1 complex in endosomes. SH2D1A inhibits the autophosphorylation of the receptor, and alters the recruitment and activation of downstream effectors and signaling cascades. Regulated by NGFR. Receptor tyrosine kinase involved in the development and the maturation of the central and peripheral nervous systems through regulation of proliferation, differentiation and survival of sympathetic and nervous neurons. High affinity receptor for NGF which is its primary ligand. Can also bind and be activated by NTF3/neurotrophin-3. However, NTF3 only supports axonal extension through NTRK1 but has no effect on neuron survival. Upon dimeric NGF ligand-binding, undergoes homodimerization, autophosphorylation and activation. Recruits, phosphorylates and/or activates several downstream effectors including SHC1, FRS2, SH2B1, SH2B2 and PLCG1 that regulate distinct overlapping signaling cascades driving cell survival and differentiation. Through SHC1 and FRS2 activates a GRB2-Ras-MAPK cascade that regulates cell differentiation and survival. Through PLCG1 controls NF-Kappa-B activation and the transcription of genes involved in cell survival. Through SHC1 and SH2B1 controls a Ras-PI3 kinase-AKT1 signaling cascade that is also regulating survival. In absence of ligand and activation, may promote cell death, making the survival of neurons dependent on trophic factors. In Rattus norvegicus (Rat), this protein is High affinity nerve growth factor receptor (Ntrk1).